We begin with the raw amino-acid sequence, 236 residues long: Orotidine 5'-phosphate decarboxylase (236 aa).

Residues Asp-17, Lys-39, 66 to 75 (DLKFHDIPNT), Thr-125, Arg-186, Gln-195, Gly-215, and Arg-216 contribute to the substrate site. The active-site Proton donor is Lys-68.

This sequence belongs to the OMP decarboxylase family. Type 1 subfamily. In terms of assembly, homodimer.

It carries out the reaction orotidine 5'-phosphate + H(+) = UMP + CO2. Its pathway is pyrimidine metabolism; UMP biosynthesis via de novo pathway; UMP from orotate: step 2/2. Functionally, catalyzes the decarboxylation of orotidine 5'-monophosphate (OMP) to uridine 5'-monophosphate (UMP). The polypeptide is Orotidine 5'-phosphate decarboxylase (Buchnera aphidicola subsp. Acyrthosiphon pisum (strain 5A)).